Reading from the N-terminus, the 305-residue chain is Homeobox protein ceh-23 (305 aa).

Disordered regions lie at residues 113–140 (ASCP…ERRR) and 262–305 (RRSK…KVLN). Over residues 120–135 (ASSQATVTLQVPSTGS) the composition is skewed to polar residues. Positions 211–270 (HRKARTIYGTTQTQQLEDMFKGQMYVVGAERENLAQRLGLSPSQVRIWFQNRRSKHRRKQ) form a DNA-binding region, homeobox. The span at 287-305 (GKDEEEDDEEDEDDVKVLN) shows a compositional bias: acidic residues.

The protein belongs to the distal-less homeobox family.

It localises to the nucleus. Functionally, probable transcription factor. Required for differentiation of AIY interneurons, acting downstream of LIM/homeobox protein ttx-3. Modulates gene expression, acting downstream of AMP kinase aak-2/AMPK signaling. Modulates lifespan. The protein is Homeobox protein ceh-23 (ceh-23) of Caenorhabditis elegans.